The primary structure comprises 268 residues: MDLYAVWGNPIVQSKSPLIQNKLATQTHQTIEYIAKLGDLDAFEQQLLAFFEEGAKGCNITSPFKERAYQLADEYSQRAKLAEACNTLKKLDDGKLYADNTDGIGLVTDLERLNWLRPNQRVLILGAGGATKGVLLPLLQAQQNIVLANRTFLKAKELAERFQPYGNIQAASMDSIPLQTYDVVINATSAGLSGGTAPVDAEILKLGSAFYDMQYTKGTDTPFIALCKSLGLTNISDGFGMLVAQAAHSFHLWRGVMPNFVAVYEQLK.

Shikimate-binding positions include 14 to 16 and Thr-61; that span reads SKS. Lys-65 acts as the Proton acceptor in catalysis. Positions 86 and 102 each coordinate shikimate. NADP(+) contacts are provided by residues 126–130, 149–154, and Met-213; these read GAGGA and NRTFLK. Tyr-215 contributes to the shikimate binding site. Gly-238 serves as a coordination point for NADP(+).

This sequence belongs to the shikimate dehydrogenase family. Homodimer.

It catalyses the reaction shikimate + NADP(+) = 3-dehydroshikimate + NADPH + H(+). The protein operates within metabolic intermediate biosynthesis; chorismate biosynthesis; chorismate from D-erythrose 4-phosphate and phosphoenolpyruvate: step 4/7. Its function is as follows. Involved in the biosynthesis of the chorismate, which leads to the biosynthesis of aromatic amino acids. Catalyzes the reversible NADPH linked reduction of 3-dehydroshikimate (DHSA) to yield shikimate (SA). This is Shikimate dehydrogenase (NADP(+)) from Haemophilus influenzae (strain PittGG).